Consider the following 469-residue polypeptide: 3-isopropylmalate dehydratase large subunit (469 aa).

[4Fe-4S] cluster contacts are provided by Cys350, Cys410, and Cys413.

It belongs to the aconitase/IPM isomerase family. LeuC type 1 subfamily. As to quaternary structure, heterodimer of LeuC and LeuD. Requires [4Fe-4S] cluster as cofactor.

It carries out the reaction (2R,3S)-3-isopropylmalate = (2S)-2-isopropylmalate. It functions in the pathway amino-acid biosynthesis; L-leucine biosynthesis; L-leucine from 3-methyl-2-oxobutanoate: step 2/4. Functionally, catalyzes the isomerization between 2-isopropylmalate and 3-isopropylmalate, via the formation of 2-isopropylmaleate. The polypeptide is 3-isopropylmalate dehydratase large subunit (Rhizobium johnstonii (strain DSM 114642 / LMG 32736 / 3841) (Rhizobium leguminosarum bv. viciae)).